Reading from the N-terminus, the 247-residue chain is Triosephosphate isomerase (247 aa).

9–11 (NWK) contributes to the substrate binding site. The active-site Electrophile is histidine 93. Residue glutamate 163 is the Proton acceptor of the active site. Substrate is bound by residues glycine 169, serine 209, and 230–231 (GG).

It belongs to the triosephosphate isomerase family. In terms of assembly, homodimer.

Its subcellular location is the cytoplasm. It catalyses the reaction D-glyceraldehyde 3-phosphate = dihydroxyacetone phosphate. It participates in carbohydrate biosynthesis; gluconeogenesis. The protein operates within carbohydrate degradation; glycolysis; D-glyceraldehyde 3-phosphate from glycerone phosphate: step 1/1. Involved in the gluconeogenesis. Catalyzes stereospecifically the conversion of dihydroxyacetone phosphate (DHAP) to D-glyceraldehyde-3-phosphate (G3P). The protein is Triosephosphate isomerase of Dinoroseobacter shibae (strain DSM 16493 / NCIMB 14021 / DFL 12).